The primary structure comprises 295 residues: Methionine aminopeptidase (295 aa).

His63 is a substrate binding site. A divalent metal cation is bound by residues Asp83, Asp94, and His154. Residue His162 coordinates substrate. A divalent metal cation-binding residues include Glu188 and Glu281.

It belongs to the peptidase M24A family. Methionine aminopeptidase archaeal type 2 subfamily. As to quaternary structure, monomer. Fe(2+) is required as a cofactor. Requires Co(2+) as cofactor. Ni(2+) serves as cofactor. It depends on Mn(2+) as a cofactor.

The enzyme catalyses Release of N-terminal amino acids, preferentially methionine, from peptides and arylamides.. Functionally, removes the N-terminal methionine from nascent proteins. The N-terminal methionine is often cleaved when the second residue in the primary sequence is small and uncharged (Met-Ala-, Cys, Gly, Pro, Ser, Thr, or Val). This chain is Methionine aminopeptidase, found in Thermococcus onnurineus (strain NA1).